The chain runs to 498 residues: Glycerol kinase (498 aa).

Thr-12 is an ADP binding site. Thr-12, Thr-13, and Ser-14 together coordinate ATP. Thr-12 contacts sn-glycerol 3-phosphate. Arg-16 is an ADP binding site. Residues Arg-82, Glu-83, Tyr-134, and Asp-244 each contribute to the sn-glycerol 3-phosphate site. 5 residues coordinate glycerol: Arg-82, Glu-83, Tyr-134, Asp-244, and Gln-245. 2 residues coordinate ADP: Thr-266 and Gly-310. Thr-266, Gly-310, Gln-314, and Gly-411 together coordinate ATP. 2 residues coordinate ADP: Gly-411 and Asn-415.

It belongs to the FGGY kinase family.

The enzyme catalyses glycerol + ATP = sn-glycerol 3-phosphate + ADP + H(+). Its pathway is polyol metabolism; glycerol degradation via glycerol kinase pathway; sn-glycerol 3-phosphate from glycerol: step 1/1. Its activity is regulated as follows. Inhibited by fructose 1,6-bisphosphate (FBP). Its function is as follows. Key enzyme in the regulation of glycerol uptake and metabolism. Catalyzes the phosphorylation of glycerol to yield sn-glycerol 3-phosphate. The protein is Glycerol kinase of Azorhizobium caulinodans (strain ATCC 43989 / DSM 5975 / JCM 20966 / LMG 6465 / NBRC 14845 / NCIMB 13405 / ORS 571).